The chain runs to 354 residues: UDP-N-acetylglucosamine--N-acetylmuramyl-(pentapeptide) pyrophosphoryl-undecaprenol N-acetylglucosamine transferase (354 aa).

UDP-N-acetyl-alpha-D-glucosamine-binding positions include 11-13 (SAG), Arg164, Ser194, and Gln289.

This sequence belongs to the glycosyltransferase 28 family. MurG subfamily.

It localises to the cell membrane. The enzyme catalyses di-trans,octa-cis-undecaprenyl diphospho-N-acetyl-alpha-D-muramoyl-L-alanyl-D-glutamyl-meso-2,6-diaminopimeloyl-D-alanyl-D-alanine + UDP-N-acetyl-alpha-D-glucosamine = di-trans,octa-cis-undecaprenyl diphospho-[N-acetyl-alpha-D-glucosaminyl-(1-&gt;4)]-N-acetyl-alpha-D-muramoyl-L-alanyl-D-glutamyl-meso-2,6-diaminopimeloyl-D-alanyl-D-alanine + UDP + H(+). The protein operates within cell wall biogenesis; peptidoglycan biosynthesis. Cell wall formation. Catalyzes the transfer of a GlcNAc subunit on undecaprenyl-pyrophosphoryl-MurNAc-pentapeptide (lipid intermediate I) to form undecaprenyl-pyrophosphoryl-MurNAc-(pentapeptide)GlcNAc (lipid intermediate II). The protein is UDP-N-acetylglucosamine--N-acetylmuramyl-(pentapeptide) pyrophosphoryl-undecaprenol N-acetylglucosamine transferase of Shouchella clausii (strain KSM-K16) (Alkalihalobacillus clausii).